Here is a 243-residue protein sequence, read N- to C-terminus: Triosephosphate isomerase (243 aa).

A substrate-binding site is contributed by 9–11 (NWK). The active-site Electrophile is His-96. Glu-165 functions as the Proton acceptor in the catalytic mechanism. Substrate is bound by residues Gly-171, Ser-204, and 225–226 (GG).

Belongs to the triosephosphate isomerase family. As to quaternary structure, homodimer.

The protein resides in the cytoplasm. It carries out the reaction D-glyceraldehyde 3-phosphate = dihydroxyacetone phosphate. Its pathway is carbohydrate biosynthesis; gluconeogenesis. The protein operates within carbohydrate degradation; glycolysis; D-glyceraldehyde 3-phosphate from glycerone phosphate: step 1/1. Involved in the gluconeogenesis. Catalyzes stereospecifically the conversion of dihydroxyacetone phosphate (DHAP) to D-glyceraldehyde-3-phosphate (G3P). The sequence is that of Triosephosphate isomerase from Nostoc punctiforme (strain ATCC 29133 / PCC 73102).